We begin with the raw amino-acid sequence, 300 residues long: Ribonuclease HIII (300 aa).

In terms of domain architecture, RNase H type-2 spans 86 to 300 (RPRLGVDESG…FNEICDSASA (215 aa)). A divalent metal cation-binding residues include D92, E93, and D196.

It belongs to the RNase HII family. RnhC subfamily. The cofactor is Mn(2+). Mg(2+) serves as cofactor.

The protein localises to the cytoplasm. It carries out the reaction Endonucleolytic cleavage to 5'-phosphomonoester.. Endonuclease that specifically degrades the RNA of RNA-DNA hybrids. This chain is Ribonuclease HIII, found in Chlamydia felis (strain Fe/C-56) (Chlamydophila felis).